Consider the following 98-residue polypeptide: MALTYMNMALAFTVSLLGLLMYRSHLMSSLLCLEGMMLSLFVTMSLTILNSNLVLASMIPIILLVFAACEAALGLSLLVMVSNTYGVDYVQNLNLLQC.

3 helical membrane passes run 1 to 21 (MALT…GLLM), 29 to 49 (SLLC…LTIL), and 61 to 81 (IILL…LVMV).

The protein belongs to the complex I subunit 4L family. Core subunit of respiratory chain NADH dehydrogenase (Complex I) which is composed of 45 different subunits.

It localises to the mitochondrion inner membrane. The catalysed reaction is a ubiquinone + NADH + 5 H(+)(in) = a ubiquinol + NAD(+) + 4 H(+)(out). Core subunit of the mitochondrial membrane respiratory chain NADH dehydrogenase (Complex I) which catalyzes electron transfer from NADH through the respiratory chain, using ubiquinone as an electron acceptor. Part of the enzyme membrane arm which is embedded in the lipid bilayer and involved in proton translocation. This Pteropus dasymallus (Ryukyu flying fox) protein is NADH-ubiquinone oxidoreductase chain 4L (MT-ND4L).